Consider the following 341-residue polypeptide: Tetraacyldisaccharide 4'-kinase (341 aa).

An ATP-binding site is contributed by 65 to 72 (TVGGSGKT).

Belongs to the LpxK family.

The enzyme catalyses a lipid A disaccharide + ATP = a lipid IVA + ADP + H(+). Its pathway is glycolipid biosynthesis; lipid IV(A) biosynthesis; lipid IV(A) from (3R)-3-hydroxytetradecanoyl-[acyl-carrier-protein] and UDP-N-acetyl-alpha-D-glucosamine: step 6/6. Its function is as follows. Transfers the gamma-phosphate of ATP to the 4'-position of a tetraacyldisaccharide 1-phosphate intermediate (termed DS-1-P) to form tetraacyldisaccharide 1,4'-bis-phosphate (lipid IVA). The sequence is that of Tetraacyldisaccharide 4'-kinase from Shewanella woodyi (strain ATCC 51908 / MS32).